The sequence spans 360 residues: F-box protein SKP2B (360 aa).

One can recognise an F-box domain in the interval 25–76 (ISEWKDIPVELLMKILNLVDDRTVIIASCICSGWRDAVSLGLTRLSLSWCKK). LRR repeat units lie at residues 77–99 (NMNSLVLSLAPKFVKLQTLVLRQ), 101–126 (KPQLEDNAVEAIANHCHELQDLDLSK), 127–152 (SSKITDHSLYSLARGCTNLTKLNLSG), 153–178 (CTSFSDTALAHLTRFCRKLKILNLCG), 180–205 (VEAVSDNTLQAIGENCNQLQSLNLGW), 206–231 (CENISDDGVMSLAYGCPDLRTLDLCS), 232–257 (CVLITDESVVALANRCIHLRSLGLYY), 258–301 (CRNI…NISQ), and 302–333 (CTYLTPSAVQAVCDTFPALHTCSGRHSLVMSG).

Component of SCF(SKP2B) E3 ubiquitin ligase complexes, which mediate the ubiquitination and subsequent proteasomal degradation of the cyclin-dependent kinase inhibitor KRP1. Does not interact with auxin. The chain is F-box protein SKP2B (SKP2B) from Arabidopsis thaliana (Mouse-ear cress).